A 214-amino-acid polypeptide reads, in one-letter code: Probable nicotinate-nucleotide adenylyltransferase (214 aa).

Belongs to the NadD family.

It carries out the reaction nicotinate beta-D-ribonucleotide + ATP + H(+) = deamido-NAD(+) + diphosphate. It participates in cofactor biosynthesis; NAD(+) biosynthesis; deamido-NAD(+) from nicotinate D-ribonucleotide: step 1/1. Functionally, catalyzes the reversible adenylation of nicotinate mononucleotide (NaMN) to nicotinic acid adenine dinucleotide (NaAD). The chain is Probable nicotinate-nucleotide adenylyltransferase from Mycobacterium tuberculosis (strain ATCC 25177 / H37Ra).